The chain runs to 481 residues: Abietadienol/abietadienal oxidase (481 aa).

The chain crosses the membrane as a helical span at residues 2–22 (ADQISLLLVVFTAAVALLHLI). Cysteine 430 contacts heme.

This sequence belongs to the cytochrome P450 family. It depends on heme as a cofactor. Expressed in young tissues such as flushing buds and green bark tissues. Lower levels in mature needles and bark.

The protein localises to the membrane. The enzyme catalyses abieta-7,13-dien-18-ol + 2 reduced [NADPH--hemoprotein reductase] + 2 O2 = abieta-7,13-dien-18-oate + 2 oxidized [NADPH--hemoprotein reductase] + 3 H2O + 3 H(+). Functionally, multifunctional and multisubstrate cytochrome P450 that oxidizes the respective carbon 18 of abietadienol, abietadienal, levopimaradienol, isopimara-7,15-dienol, isopimara-7,15-dienal, dehydroabietadienol, and dehydroabietadienal. This is Abietadienol/abietadienal oxidase (CYP720B1) from Pinus taeda (Loblolly pine).